The sequence spans 269 residues: MAFSPANSFLINKSICESKEVEPLEANLFGKLHNKLLICKAKKENLEKKLAYQMMYSKLLKSLPKLSSLEENKLTKLKAPIEDMENTKKELEEIRKQSTETELRYLKSLSNTLSFGTLSLSNEINKVGPSASFMLKEVHDSVQVLEQRLEKMGLIEKPSESSESSIYSILASLKHTNDSLQKKELSPHEIAESPSSHSTSPMGRNVDTETLSFLLIDWQRLCAEQNTFLRDITNNMSSSVPQDVLSQLRQFFFRSELLSDKLSNLCSES.

Residues glutamine 181–alanine 191 are compositionally biased toward basic and acidic residues. The disordered stretch occupies residues glutamine 181 to glycine 203. Positions serine 193–methionine 202 are enriched in polar residues. Serine 200 carries the phosphoserine modification.

This is an uncharacterized protein from Schizosaccharomyces pombe (strain 972 / ATCC 24843) (Fission yeast).